The primary structure comprises 462 residues: UPF0236 protein TTE2489 (462 aa).

This sequence belongs to the UPF0236 family.

This is UPF0236 protein TTE2489 from Caldanaerobacter subterraneus subsp. tengcongensis (strain DSM 15242 / JCM 11007 / NBRC 100824 / MB4) (Thermoanaerobacter tengcongensis).